Here is a 163-residue protein sequence, read N- to C-terminus: ADP-ribosylation factor-like protein 2-binding protein (163 aa).

Belongs to the ARL2BP family. In terms of assembly, found in a complex with ARL2BP, ARL2 and SLC25A6. Found in a complex with ARL2, ARL2BP and SLC25A4. Interacts with STAT2, STAT3 and STAT4. Interacts with GTP-bound ARL2 and ARL3; the complex ARL2-ARL2BP as well as ARL2BP alone, binds to SLC25A4. Interaction with ARL2 may be required for targeting to cilia basal body. Interacts with STAT3; interaction is enhanced with ARL2. As to expression, expressed in retina pigment epithelial cells (at protein level). Widely expressed.

It localises to the cytoplasm. The protein localises to the mitochondrion intermembrane space. Its subcellular location is the cytoskeleton. It is found in the microtubule organizing center. The protein resides in the centrosome. It localises to the nucleus. The protein localises to the spindle. Its subcellular location is the cilium basal body. Its function is as follows. Together with ARL2, plays a role in the nuclear translocation, retention and transcriptional activity of STAT3. May play a role as an effector of ARL2. This is ADP-ribosylation factor-like protein 2-binding protein (ARL2BP) from Homo sapiens (Human).